We begin with the raw amino-acid sequence, 354 residues long: Regulatory protein RapD (354 aa).

TPR repeat units lie at residues 64 to 105 (FENQ…VKTA), 107 to 126 (KHAV…IHNT), 130 to 163 (ADLY…YLHQ), 171 to 204 (ITCK…TQQL), 211 to 244 (CHAY…QEFE), and 321 to 353 (IEAW…FIMR).

The protein belongs to the Rap family.

It localises to the cytoplasm. The sequence is that of Regulatory protein RapD (rapD) from Bacillus subtilis (strain 168).